Reading from the N-terminus, the 497-residue chain is Alkane hydroxylase MAH1 (497 aa).

A helical transmembrane segment spans residues 3-23 (MLGFYVTFIFFLVCLFTYFFL). Position 444 (Cys444) interacts with heme.

The protein belongs to the cytochrome P450 family. Heme serves as cofactor. As to expression, expressed in the expanding regions of the inflorescence stems, specifically to the epidermal pavement cells, petioles and siliques.

The protein resides in the endoplasmic reticulum membrane. Its function is as follows. Involved in the formation of secondary alcohols and ketones in stem cuticular wax. Catalyzes the hydroxylation of a methylene unit in the middle of alkane molecules to form secondary alcohols and possibly also a second hydroxylation leading to the corresponding ketones. The chain is Alkane hydroxylase MAH1 from Arabidopsis thaliana (Mouse-ear cress).